The primary structure comprises 676 residues: XK-related protein 5 (676 aa).

7 helical membrane-spanning segments follow: residues 37–57, 114–134, 140–160, 206–226, 239–259, 266–286, and 294–314; these read WLAL…FLWF, LLEA…VFLA, IVPG…LVSY, VWVL…LVAQ, LFNL…WDSP, SFYL…TDFL, and LWTV…LVIY. Disordered regions lie at residues 336–362, 372–391, 495–538, and 598–661; these read PIED…DSSS, TSLD…GLGE, LEDN…KEGQ, and PIPG…IQRD. The segment covering 498–509 has biased composition (polar residues); that stretch reads NATTQKPPATQE.

It belongs to the XK family.

The protein resides in the cell membrane. The polypeptide is XK-related protein 5 (Mus musculus (Mouse)).